A 744-amino-acid chain; its full sequence is MSISTSTLGYPRIGKNREVKKALESFWQQKISADELLKIVREIEEASWQTQTKAGIERIGIGDATLYDQILDWSFRFGIIPKRFQQFQNLECYFAMARGKDGILALEMTKWFDTNYHYLVPEITPDITPKADFSDFLETVKRAKKIIGKSAVPIIISPITFIRLSRLESVEFDNILAQLLPLYSDLLTKLKKLGISEIQLHEPALVFGDSSNLKKQFEMAYAELAKVGLNIHLVTYFDDLGETYPWVMKLPVTSISLDLTRGQNLELIKSYGFPADKTLGAGVVDARNIWRIRTQEVTSLLEELKGIIPNISVQPSASLQFVPYDVRREVKLPEALRNVLSFAEQKLEETVLLSKALTGKSNKSEIENIEIYWQEFYKFSPANEKVKSQIKALKETDFRRSMSYLERLDNQIKLPAFPTTTIGSFPQTKQVRKLRARYKKGELTQAEYLAQIDANIAYCIGLQEGMGMDVLVHGEFERSDMVEYFGEQLDGYTFTTHGWVQSYGSRYVRPPIIFGDIYRPHAMTIREFEVAQSLTEKPVKGMLTGPVTMLNWSYPRTDISRQEQAFQLALAIREELKDLEKAGAAFIQVDEPAMREGLPLKQQRWHEYLNWAVDAFRLSTAIARPETQVHTHMCYSEFGDIMESIKQLDADVISIEDSRSNNETLMQLTDADYPAQVGPGVYDVHSPSIPTTEYLRESLYKCIQYLPVTQIWVNPDCGLKTRRWEEAIPATRNMVQAAISLRQE.

Residues 17 to 20 (REVK) and Lys-110 contribute to the 5-methyltetrahydropteroyltri-L-glutamate site. Residues 422–424 (IGS) and Glu-475 each bind L-homocysteine. L-methionine contacts are provided by residues 422 to 424 (IGS) and Glu-475. Residue Trp-552 coordinates 5-methyltetrahydropteroyltri-L-glutamate. Asp-590 lines the L-homocysteine pocket. Asp-590 serves as a coordination point for L-methionine. Glu-596 provides a ligand contact to 5-methyltetrahydropteroyltri-L-glutamate. Residues His-632, Cys-634, and Glu-656 each contribute to the Zn(2+) site. The active-site Proton donor is the His-685. Cys-717 contributes to the Zn(2+) binding site.

This sequence belongs to the vitamin-B12 independent methionine synthase family. Zn(2+) is required as a cofactor.

It catalyses the reaction 5-methyltetrahydropteroyltri-L-glutamate + L-homocysteine = tetrahydropteroyltri-L-glutamate + L-methionine. It functions in the pathway amino-acid biosynthesis; L-methionine biosynthesis via de novo pathway; L-methionine from L-homocysteine (MetE route): step 1/1. In terms of biological role, catalyzes the transfer of a methyl group from 5-methyltetrahydrofolate to homocysteine resulting in methionine formation. This chain is 5-methyltetrahydropteroyltriglutamate--homocysteine methyltransferase, found in Trichodesmium erythraeum (strain IMS101).